Here is a 72-residue protein sequence, read N- to C-terminus: Translation initiation factor IF-1 (72 aa).

The region spanning 1-72 is the S1-like domain; sequence MAKEDSIEMQ…TKGRIVFRAR (72 aa).

It belongs to the IF-1 family. As to quaternary structure, component of the 30S ribosomal translation pre-initiation complex which assembles on the 30S ribosome in the order IF-2 and IF-3, IF-1 and N-formylmethionyl-tRNA(fMet); mRNA recruitment can occur at any time during PIC assembly.

Its subcellular location is the cytoplasm. One of the essential components for the initiation of protein synthesis. Stabilizes the binding of IF-2 and IF-3 on the 30S subunit to which N-formylmethionyl-tRNA(fMet) subsequently binds. Helps modulate mRNA selection, yielding the 30S pre-initiation complex (PIC). Upon addition of the 50S ribosomal subunit IF-1, IF-2 and IF-3 are released leaving the mature 70S translation initiation complex. In Shewanella amazonensis (strain ATCC BAA-1098 / SB2B), this protein is Translation initiation factor IF-1.